The chain runs to 256 residues: Ribosomal RNA small subunit methyltransferase J (256 aa).

Residues 101–102 (RD), 117–118 (ER), and Asp174 each bind S-adenosyl-L-methionine.

It belongs to the methyltransferase superfamily. RsmJ family.

Its subcellular location is the cytoplasm. The catalysed reaction is guanosine(1516) in 16S rRNA + S-adenosyl-L-methionine = N(2)-methylguanosine(1516) in 16S rRNA + S-adenosyl-L-homocysteine + H(+). Its function is as follows. Specifically methylates the guanosine in position 1516 of 16S rRNA. This is Ribosomal RNA small subunit methyltransferase J from Chromohalobacter salexigens (strain ATCC BAA-138 / DSM 3043 / CIP 106854 / NCIMB 13768 / 1H11).